A 449-amino-acid chain; its full sequence is 1H-pyrrole-2-carbonyl-[peptidyl-carrier protein] chlorinase (449 aa).

Residues A16, E35, R41, H43, V44, S47, R123, I147, and D316 each coordinate FAD. 2 residues coordinate chloride: S327 and G328. Position 329 (V329) interacts with FAD.

Belongs to the flavin-dependent halogenase family. Homodimer.

The catalysed reaction is (1H-pyrrole-2-carbonyl)-[peptidyl-carrier protein] + 2 FADH2 + 2 chloride + 2 O2 = (4,5-dichloro-1H-pyrrole-2-carbonyl)-[peptidyl-carrier protein] + 2 FAD + 4 H2O. The enzyme catalyses (1H-pyrrole-2-carbonyl)-[peptidyl-carrier protein] + FADH2 + chloride + O2 = (5-chloro-1H-pyrrole-2-carbonyl)-[peptidyl-carrier protein] + FAD + 2 H2O. It catalyses the reaction (5-chloro-1H-pyrrole-2-carbonyl)-[peptidyl-carrier protein] + FADH2 + chloride + O2 = (4,5-dichloro-1H-pyrrole-2-carbonyl)-[peptidyl-carrier protein] + FAD + 2 H2O. It participates in antibiotic biosynthesis. Its function is as follows. Involved in the biosynthesis of the antibiotic pyoluteorin. Catalyzes the dichlorination of the pyrrole ring of pyrrolyl-S-PltL, generating the 5-chloropyrrolyl-S-PltL intermediate and then the 4,5-dichloropyrrolyl-S-PltL product. The polypeptide is 1H-pyrrole-2-carbonyl-[peptidyl-carrier protein] chlorinase (Pseudomonas fluorescens (strain ATCC BAA-477 / NRRL B-23932 / Pf-5)).